A 547-amino-acid chain; its full sequence is RNA polymerase sigma factor sigF, chloroplastic (547 aa).

Polar residues predominate over residues 1 to 17 (MEATRNLVSSSPSFQTK). 2 disordered regions span residues 1 to 28 (MEAT…SSPS) and 54 to 79 (FPAS…DDRT). The transit peptide at 1 to 55 (MEATRNLVSSSPSFQTKTHLKSSYSSPSSVVMLHDQTTTPVVNSRHLNSLSRHFP) directs the protein to the chloroplast. Residues 62 to 79 (EPREESRPLSHALRDDRT) show a composition bias toward basic and acidic residues. A phosphoserine; by CK2 mark is found at serine 94, serine 95, serine 174, serine 176, serine 177, and serine 180. The interval 163 to 226 (ANPSDNIKDS…QKTSAKKKYK (64 aa)) is disordered. Positions 172–181 (SLSTSSSMSL) are enriched in low complexity. The residue at position 249 (threonine 249) is a Phosphothreonine; by CK2. The Polymerase core binding motif lies at 335–348 (DLLQEGSMGLMKSV). Positions 505–524 (LSEIGEIYGLSKERVRQLES) form a DNA-binding region, H-T-H motif.

The protein belongs to the sigma-70 factor family. Interacts (via N-terminus) with DG1 (via C-terminus). Phosphorylated to acquire sigma activity; site-specific phosphorylation regulates promoter affinity. Phosphorylation at Ser-174 by chloroplastic CK2 requires prior phosphorylation at Ser-177. Phosphorylation at either Ser-94, Ser-95 or Ser-174 is required for sigma activation. Expressed in seedling, accumulating progressively. Present in leaves but not in roots.

It is found in the plastid. The protein localises to the chloroplast. Its function is as follows. Sigma factors are initiation factors that promote the attachment of plastid-encoded RNA polymerase (PEP) to specific initiation sites and are then released. Regulates transcription in chloroplast in a DG1-dependent manner. Involved in light-dependent chloroplast development. Required during early plant development and primary leaf formation. This chain is RNA polymerase sigma factor sigF, chloroplastic (SIGF), found in Arabidopsis thaliana (Mouse-ear cress).